Reading from the N-terminus, the 193-residue chain is General stress protein 16U (193 aa).

It belongs to the CAPAB/TerDEXZ family.

This is General stress protein 16U (yceD) from Bacillus subtilis (strain 168).